Reading from the N-terminus, the 500-residue chain is Prostacyclin synthase (500 aa).

The chain crosses the membrane as a helical span at residues 1 to 20 (MSWAVVFGLLAALLLLLLLT). Substrate-binding positions include Arg-106, Leu-112, Asn-287, 358–359 (TR), and Arg-382. Cys-441 contributes to the heme binding site.

The protein belongs to the cytochrome P450 family. Requires heme as cofactor.

Its subcellular location is the endoplasmic reticulum membrane. It carries out the reaction prostaglandin H2 = prostaglandin I2. The enzyme catalyses a hydroperoxyeicosatetraenoate = an oxoeicosatetraenoate + H2O. The catalysed reaction is (15S)-hydroperoxy-(5Z,8Z,11Z,13E)-eicosatetraenoate = 15-oxo-(5Z,8Z,11Z,13E)-eicosatetraenoate + H2O. It catalyses the reaction (15S)-hydroperoxy-(5Z,8Z,11Z,13E)-eicosatetraenoate + AH2 = (15S)-hydroxy-(5Z,8Z,11Z,13E)-eicosatetraenoate + A + H2O. In terms of biological role, catalyzes the biosynthesis and metabolism of eicosanoids. Catalyzes the isomerization of prostaglandin H2 to prostacyclin (= prostaglandin I2), a potent mediator of vasodilation and inhibitor of platelet aggregation. Additionally, displays dehydratase activity, toward hydroperoxyeicosatetraenoates (HPETEs), especially toward (15S)-hydroperoxy-(5Z,8Z,11Z,13E)-eicosatetraenoate (15(S)-HPETE). The polypeptide is Prostacyclin synthase (PTGIS) (Bos taurus (Bovine)).